The sequence spans 200 residues: Imidazole glycerol phosphate synthase subunit HisH (200 aa).

In terms of domain architecture, Glutamine amidotransferase type-1 spans 3–200 (DVALIDAGGA…LRNFLEMSFP (198 aa)). Cysteine 78 serves as the catalytic Nucleophile. Residues histidine 179 and glutamate 181 contribute to the active site.

As to quaternary structure, heterodimer of HisH and HisF.

Its subcellular location is the cytoplasm. It carries out the reaction 5-[(5-phospho-1-deoxy-D-ribulos-1-ylimino)methylamino]-1-(5-phospho-beta-D-ribosyl)imidazole-4-carboxamide + L-glutamine = D-erythro-1-(imidazol-4-yl)glycerol 3-phosphate + 5-amino-1-(5-phospho-beta-D-ribosyl)imidazole-4-carboxamide + L-glutamate + H(+). The enzyme catalyses L-glutamine + H2O = L-glutamate + NH4(+). It functions in the pathway amino-acid biosynthesis; L-histidine biosynthesis; L-histidine from 5-phospho-alpha-D-ribose 1-diphosphate: step 5/9. In terms of biological role, IGPS catalyzes the conversion of PRFAR and glutamine to IGP, AICAR and glutamate. The HisH subunit catalyzes the hydrolysis of glutamine to glutamate and ammonia as part of the synthesis of IGP and AICAR. The resulting ammonia molecule is channeled to the active site of HisF. This chain is Imidazole glycerol phosphate synthase subunit HisH, found in Xanthomonas euvesicatoria pv. vesicatoria (strain 85-10) (Xanthomonas campestris pv. vesicatoria).